We begin with the raw amino-acid sequence, 76 residues long: Conopeptide X11.1 (76 aa).

Residues 1 to 20 form the signal peptide; it reads MMKLSVSFLLLLMLLPFITG. Positions 21 to 39 are excised as a propeptide; sequence EENSDSDVLKSGAAVRQGR. Intrachain disulfides connect Cys42-Cys56, Cys49-Cys61, Cys55-Cys66, and Cys60-Cys73.

In terms of tissue distribution, expressed by the venom duct.

The protein localises to the secreted. In terms of biological role, antimicrobial peptide that potently inhibits growth of Mycobacterium tuberculosis (H37Rv strain) (MIC=3 uM). The protein is Conopeptide X11.1 of Conasprella ximenes (Interrupted cone).